The primary structure comprises 96 residues: Co-chaperonin GroES (96 aa).

This sequence belongs to the GroES chaperonin family. As to quaternary structure, heptamer of 7 subunits arranged in a ring. Interacts with the chaperonin GroEL.

It localises to the cytoplasm. Together with the chaperonin GroEL, plays an essential role in assisting protein folding. The GroEL-GroES system forms a nano-cage that allows encapsulation of the non-native substrate proteins and provides a physical environment optimized to promote and accelerate protein folding. GroES binds to the apical surface of the GroEL ring, thereby capping the opening of the GroEL channel. The protein is Co-chaperonin GroES of Shewanella piezotolerans (strain WP3 / JCM 13877).